We begin with the raw amino-acid sequence, 331 residues long: MELHILEHRVRVLSIARPGLWLYTHPLIKLLFLPCRSRCKFFSLTETPEDYTLMVDEEGFKELPPSEFLQVAEATWLVMNVSHSGSVVQAAGVTKIARSVIAPLAEHHVSVLMLSTYQTDFILVREQDLSVVIHTLAQEFQIYREVGGEPVPVTGDDSSNGFPQIQHGPSPTVHPIQSPQNRFCVLTLDPETLPAVATTLIDVLFYSHSVPKEAASGGPESTSIPFFAFSLIEGYISIVMDAEIQRKFPSDLLLTSSSGELWRMVRIGGQPLGFDECGIVAQIAGPLAAVDISAYYISTFNFDHALVPEDEIGCVIDILQRRQESQASKDP.

A Phosphoserine modification is found at S14. ACT domains lie at 72–137 (AEAT…HTLA) and 259–320 (GELW…DILQ). L-arginine contacts are provided by residues 110–111 (SV), G273, 279–280 (IV), and 299–303 (TFNFD).

It belongs to the GATS family. In terms of assembly, forms homodimers and heterodimers with CASTOR2. Interacts with the GATOR2 complex which is composed of MIOS, SEC13, SEH1L, WDR24 and WDR59; the interaction is negatively regulated by arginine. Interacts with TM4SF5; the interaction is positively regulated by leucine and is negatively regulated by arginine. In terms of processing, phosphorylation at Ser-14 by AKT1, promoting the interaction between CASTOR1 and RNF167. Post-translationally, ubiquitinated by RNF167 via 'Lys-29'-polyubiquitination, leading to its degradation, releasing the GATOR2 complex. Ubiquitination by RNF167 is promoted by phosphorylation at Ser-14 by AKT1.

The protein resides in the cytoplasm. It is found in the cytosol. In terms of biological role, functions as an intracellular arginine sensor within the amino acid-sensing branch of the TORC1 signaling pathway. As a homodimer or a heterodimer with CASTOR2, binds and inhibits the GATOR subcomplex GATOR2 and thereby mTORC1. Binding of arginine to CASTOR1 allosterically disrupts the interaction of CASTOR1-containing dimers with GATOR2 which can in turn activate mTORC1 and the TORC1 signaling pathway. The chain is Cytosolic arginine sensor for mTORC1 subunit 1 from Mus musculus (Mouse).